A 926-amino-acid chain; its full sequence is Alanine--tRNA ligase (926 aa).

The Zn(2+) site is built by His-615, His-619, Cys-719, and His-723. Positions 887–910 (RVGGGGGGPPDFAQGGGPDADALD) are disordered. Residues 888–904 (VGGGGGGPPDFAQGGGP) are compositionally biased toward gly residues.

It belongs to the class-II aminoacyl-tRNA synthetase family. Requires Zn(2+) as cofactor.

The protein localises to the cytoplasm. It carries out the reaction tRNA(Ala) + L-alanine + ATP = L-alanyl-tRNA(Ala) + AMP + diphosphate. Functionally, catalyzes the attachment of alanine to tRNA(Ala) in a two-step reaction: alanine is first activated by ATP to form Ala-AMP and then transferred to the acceptor end of tRNA(Ala). Also edits incorrectly charged Ser-tRNA(Ala) and Gly-tRNA(Ala) via its editing domain. The chain is Alanine--tRNA ligase from Halorubrum lacusprofundi (strain ATCC 49239 / DSM 5036 / JCM 8891 / ACAM 34).